The sequence spans 275 residues: Fructose-2,6-bisphosphatase TIGAR (275 aa).

The active-site Tele-phosphohistidine intermediate is the His-11. Glu-89 acts as the Proton donor/acceptor in catalysis.

It belongs to the phosphoglycerate mutase family.

The protein localises to the cytoplasm. The protein resides in the nucleus. It is found in the mitochondrion. It carries out the reaction beta-D-fructose 2,6-bisphosphate + H2O = beta-D-fructose 6-phosphate + phosphate. Its function is as follows. Fructose-bisphosphatase hydrolyzing fructose-2,6-bisphosphate as well as fructose-1,6-bisphosphate. Acts as a negative regulator of glycolysis by lowering intracellular levels of fructose-2,6-bisphosphate in a p53/TP53-dependent manner, resulting in the pentose phosphate pathway (PPP) activation and NADPH production. Contributes to the generation of reduced glutathione to cause a decrease in intracellular reactive oxygen species (ROS) content, correlating with its ability to protect cells from oxidative or metabolic stress-induced cell death. May play a role in mitophagy inhibition. This chain is Fructose-2,6-bisphosphatase TIGAR, found in Xenopus laevis (African clawed frog).